Consider the following 415-residue polypeptide: Acetyl-CoA acetyltransferase 1 (415 aa).

The active-site Acyl-thioester intermediate is C99. K239 serves as a coordination point for CoA. A K(+)-binding site is contributed by A256. A CoA-binding site is contributed by S260. V357 contributes to the K(+) binding site. Catalysis depends on proton acceptor residues H361 and C391.

The protein belongs to the thiolase-like superfamily. Thiolase family. In terms of tissue distribution, expressed in the vascular system of roots, cotyledons, young leaves, fully expanded leaves, stems, flowers, and funiculi of siliques.

The protein localises to the cytoplasm. It is found in the peroxisome. The enzyme catalyses 2 acetyl-CoA = acetoacetyl-CoA + CoA. Its pathway is metabolic intermediate biosynthesis; (R)-mevalonate biosynthesis; (R)-mevalonate from acetyl-CoA: step 1/3. Its function is as follows. Catalyzes the condensation of two molecules of acetyl-CoA to produce acetoacetyl-CoA. The protein is Acetyl-CoA acetyltransferase 1 of Arabidopsis thaliana (Mouse-ear cress).